The following is a 483-amino-acid chain: GDP-fucose protein O-fucosyltransferase 3 (483 aa).

At 1 to 8 (MVRIPRRK) the chain is on the cytoplasmic side. Residues 9-31 (LLPSCLCMTATVFLMVTVQVLVE) traverse the membrane as a helical; Signal-anchor for type II membrane protein segment. The Lumenal segment spans residues 32 to 483 (LGKFERKKFK…FWALVFKDSF (452 aa)). The tract at residues 45–64 (LQDGQKDVEGDPKHLNPLPK) is disordered. Asn-110, Asn-168, and Asn-318 each carry an N-linked (GlcNAc...) asparagine glycan. The cysteines at positions 389 and 392 are disulfide-linked. Asn-468 carries an N-linked (GlcNAc...) asparagine glycan.

Belongs to the glycosyltransferase 10 family.

The protein localises to the endoplasmic reticulum membrane. The catalysed reaction is L-threonyl-[protein] + GDP-beta-L-fucose = 3-O-(alpha-L-fucosyl)-L-threonyl-[protein] + GDP + H(+). It carries out the reaction L-seryl-[protein] + GDP-beta-L-fucose = 3-O-(alpha-L-fucosyl)-L-seryl-[protein] + GDP + H(+). The protein operates within protein modification; protein glycosylation. Functionally, protein O-fucosyltransferase that specifically catalyzes O-fucosylation of serine or threonine residues in EMI domains of target proteins, such as MMRN1, MMRN2 and EMID1. Attaches fucose through an O-glycosidic linkage. O-fucosylation of EMI domain-containing proteins may be required for facilitating protein folding and secretion. May also show alpha-(1,3)-fucosyltransferase activity toward the innermost N-acetyl glucosamine (GlcNAc) residue in biantennary N-glycan acceptors. However, this was tested with a library of synthetic substrates and this activity is unsure in vivo. May be involved in biosynthesis of Lewis X-carrying biantennary N-glycans that regulate neuron stem cell self-renewal during brain development. The sequence is that of GDP-fucose protein O-fucosyltransferase 3 (Fut10) from Rattus norvegicus (Rat).